The sequence spans 107 residues: Phosphoribosyl-ATP pyrophosphatase (107 aa).

This sequence belongs to the PRA-PH family.

It is found in the cytoplasm. It catalyses the reaction 1-(5-phospho-beta-D-ribosyl)-ATP + H2O = 1-(5-phospho-beta-D-ribosyl)-5'-AMP + diphosphate + H(+). Its pathway is amino-acid biosynthesis; L-histidine biosynthesis; L-histidine from 5-phospho-alpha-D-ribose 1-diphosphate: step 2/9. In Rhizobium etli (strain CIAT 652), this protein is Phosphoribosyl-ATP pyrophosphatase.